A 212-amino-acid chain; its full sequence is Golgi-associated RAB2 interactor protein 5A (212 aa).

Disordered stretches follow at residues 1-21 (MKGG…LAPA) and 162-212 (PFTH…LWGL). The span at 169–185 (APEEEEEEEEEEEEEEV) shows a compositional bias: acidic residues.

The protein belongs to the GARIN family. In terms of assembly, interacts (via N-terminus) with RAB2B (in GTP-bound form). Expressed in testis (at protein level).

Its subcellular location is the golgi apparatus. Functionally, RAB2B effector protein which promotes cytosolic DNA-induced innate immune responses. Regulates IFN responses against DNA viruses by regulating the CGAS-STING signaling axis. The sequence is that of Golgi-associated RAB2 interactor protein 5A from Mus musculus (Mouse).